A 199-amino-acid polypeptide reads, in one-letter code: Imidazoleglycerol-phosphate dehydratase (199 aa).

The protein belongs to the imidazoleglycerol-phosphate dehydratase family.

Its subcellular location is the cytoplasm. It carries out the reaction D-erythro-1-(imidazol-4-yl)glycerol 3-phosphate = 3-(imidazol-4-yl)-2-oxopropyl phosphate + H2O. The protein operates within amino-acid biosynthesis; L-histidine biosynthesis; L-histidine from 5-phospho-alpha-D-ribose 1-diphosphate: step 6/9. This Desulfotalea psychrophila (strain LSv54 / DSM 12343) protein is Imidazoleglycerol-phosphate dehydratase.